A 237-amino-acid polypeptide reads, in one-letter code: Zinc finger AN1 domain-containing stress-associated protein 14 (237 aa).

Residues 1–31 form a disordered region; that stretch reads MATKRKCPANGDDGGVADLEPVAGGSFASPP. An AN1-type zinc finger spans residues 171–217; it reads QPEANRCATCRRKVGLTGFKCRCGGTFCGGHRYADEHGCGFDYKSSG. Residues C177, C180, C191, C193, C198, H201, H207, and C209 each coordinate Zn(2+).

Its function is as follows. May be involved in environmental stress response. The polypeptide is Zinc finger AN1 domain-containing stress-associated protein 14 (SAP14) (Oryza sativa subsp. japonica (Rice)).